The sequence spans 461 residues: Lysosomal proton-coupled steroid conjugate and bile acid symporter SLC46A3 (461 aa).

The N-terminal stretch at 1-25 (MKIPFVEPVICLSVFAVTLNSPLTT) is a signal peptide. Topologically, residues 26–70 (QYVYRRIWEETGNYSIALESNTSECAKNKSSPIFAFQEEVQKKVS) are extracellular. Residues Asn38, Asn46, and Asn53 are each glycosylated (N-linked (GlcNAc...) asparagine). The chain crosses the membrane as a helical span at residues 71 to 91 (LFNLEMDISGLIPGLVSTFVF). Residues 92-101 (LSHSDHGGRK) lie on the Cytoplasmic side of the membrane. The chain crosses the membrane as a helical span at residues 102 to 124 (FPLILSSVGALANSAWLCLLSYF). At 125-133 (ALPIQLLIA) the chain is on the extracellular side. The chain crosses the membrane as a helical span at residues 134–156 (STFIGALFGNYTTFLGASFAYIV). Residues 157-170 (DQCKEKKQRTIRIA) are Cytoplasmic-facing. A helical transmembrane segment spans residues 171 to 191 (IIDFLFGVVSGLTGLSSGYFI). The Extracellular portion of the chain corresponds to 192–195 (RGLG). The chain crosses the membrane as a helical span at residues 196–216 (FVWSFLIVTVALFVNLIYILL). Residues 217–261 (FLEDSMKESSSQNISVSWTETFKNLFHRTYMLFKNASGEQQSLCC) are Cytoplasmic-facing. Residues 262 to 282 (LLLFTMITYFFVTIGVSPIFV) form a helical membrane-spanning segment. The Extracellular portion of the chain corresponds to 283-294 (LYELDSPLCWDE). The helical transmembrane segment at 295–315 (VLIGYGSALGSVTFFSSFLGI) threads the bilayer. The Cytoplasmic portion of the chain corresponds to 316–324 (WLFSYCMED). A helical transmembrane segment spans residues 325–345 (IHMAFIGTFTTMVGMAMTAFA). Over 346–347 (RT) the chain is Extracellular. A helical membrane pass occupies residues 348–368 (TLMMFLVRLPFLFTVMPLSVL). Residues 369–382 (RSMISKVVHSTEQG) are Cytoplasmic-facing. A helical transmembrane segment spans residues 383 to 403 (TMFACLAFLETLGGITAVSTF). Topologically, residues 404-415 (NGIYSATVAWCK) are extracellular. A helical membrane pass occupies residues 416-436 (GFVFLLSAVLLLIPAISLCVI). Topologically, residues 437-461 (KYVSRNTGSYVLLIQEESSEDTSDR) are cytoplasmic. A Tyrosine-based lysosomal-sorting motif motif is present at residues 446–449 (YVLL).

This sequence belongs to the major facilitator superfamily. SLC46A family.

The protein resides in the lysosome membrane. It catalyses the reaction estrone 3-sulfate(out) + n H(+)(out) = estrone 3-sulfate(in) + n H(+)(in). It carries out the reaction 25-hydroxyvitamin D3 sulfate(out) + n H(+)(out) = 25-hydroxyvitamin D3 sulfate(in) + n H(+)(in). The catalysed reaction is cholate(out) + n H(+)(out) = cholate(in) + n H(+)(in). The enzyme catalyses glycocholate(out) + n H(+)(out) = glycocholate(in) + n H(+)(in). It catalyses the reaction taurocholate(out) + n H(+)(out) = taurocholate(in) + n H(+)(in). It carries out the reaction dehydroepiandrosterone 3-sulfate(out) + n H(+)(out) = dehydroepiandrosterone 3-sulfate(in) + n H(+)(in). The catalysed reaction is N-acetyl-D-muramoyl-L-alanyl-D-isoglutamine(out) + n H(+)(out) = N-acetyl-D-muramoyl-L-alanyl-D-isoglutamine(in) + n H(+)(in). The enzyme catalyses 2',3'-cGAMP(out) + n H(+)(out) = 2',3'-cGAMP(in) + n H(+)(in). Lysosomal proton-coupled steroid conjugate and bile acid transporter. Preferentially recognizes lipophilic steroid conjugates or bile acis as endogenous substrates and seems to mediate escape from lysosomes to the cytoplasm. Modulates hepatic cytosolic copper homeostasis, maybe acting as a lysosomal copper transporter and sequestering copper ions in the lysosome. Delivers pathogen-associated molecular patterns to cytosolic pattern recognition receptors as part of the innate immune response to microbes. Selectively transports bacterial muramyl dipeptide (MDP) into the cytosol for recognition by NOD2, triggering inflammatory responses. Likely acts as a redundant importer of cyclic GMP-AMP dinucleotides (cGAMPs) in monocyte and macrophage cell lineages. The transport mechanism, its electrogenicity and stoichiometry remain to be elucidated. In Bos taurus (Bovine), this protein is Lysosomal proton-coupled steroid conjugate and bile acid symporter SLC46A3 (SLC46A3).